The chain runs to 239 residues: Proteasome subunit beta (239 aa).

Polar residues predominate over residues 1–16 (MRQPDSSLPRTGQDHT). Positions 1–32 (MRQPDSSLPRTGQDHTLSPYEPELGEVPSNDL) are disordered. A propeptide spans 1 to 44 (MRQPDSSLPRTGQDHTLSPYEPELGEVPSNDLSMADLDNVNKTG) (removed in mature form; by autocatalysis). The active-site Nucleophile is the Thr-45.

Belongs to the peptidase T1B family. In terms of assembly, the 20S proteasome core is composed of 14 alpha and 14 beta subunits that assemble into four stacked heptameric rings, resulting in a barrel-shaped structure. The two inner rings, each composed of seven catalytic beta subunits, are sandwiched by two outer rings, each composed of seven alpha subunits. The catalytic chamber with the active sites is on the inside of the barrel. Has a gated structure, the ends of the cylinder being occluded by the N-termini of the alpha-subunits. Is capped at one or both ends by the proteasome regulatory ATPase, PAN.

The protein resides in the cytoplasm. It carries out the reaction Cleavage of peptide bonds with very broad specificity.. With respect to regulation, the formation of the proteasomal ATPase PAN-20S proteasome complex, via the docking of the C-termini of PAN into the intersubunit pockets in the alpha-rings, triggers opening of the gate for substrate entry. Interconversion between the open-gate and close-gate conformations leads to a dynamic regulation of the 20S proteasome proteolysis activity. Component of the proteasome core, a large protease complex with broad specificity involved in protein degradation. The sequence is that of Proteasome subunit beta from Natronomonas pharaonis (strain ATCC 35678 / DSM 2160 / CIP 103997 / JCM 8858 / NBRC 14720 / NCIMB 2260 / Gabara) (Halobacterium pharaonis).